The following is a 356-amino-acid chain: NADH-quinone oxidoreductase subunit H (356 aa).

9 helical membrane-spanning segments follow: residues 16–36, 52–72, 85–105, 117–137, 163–183, 201–221, 254–274, 295–315, and 334–354; these read IAVL…AFLL, PNVV…KFVF, LYLL…AVVP, VGIL…IIGG, IGFI…SEII, WPMP…ISAL, FMVG…ILFF, AWYF…FAMV, and IFLP…VYGP.

The protein belongs to the complex I subunit 1 family. In terms of assembly, NDH-1 is composed of 14 different subunits. Subunits NuoA, H, J, K, L, M, N constitute the membrane sector of the complex.

The protein resides in the cell inner membrane. It carries out the reaction a quinone + NADH + 5 H(+)(in) = a quinol + NAD(+) + 4 H(+)(out). NDH-1 shuttles electrons from NADH, via FMN and iron-sulfur (Fe-S) centers, to quinones in the respiratory chain. The immediate electron acceptor for the enzyme in this species is believed to be ubiquinone. Couples the redox reaction to proton translocation (for every two electrons transferred, four hydrogen ions are translocated across the cytoplasmic membrane), and thus conserves the redox energy in a proton gradient. This subunit may bind ubiquinone. The chain is NADH-quinone oxidoreductase subunit H from Maricaulis maris (strain MCS10) (Caulobacter maris).